The primary structure comprises 213 residues: Glycerol-3-phosphate acyltransferase (213 aa).

Transmembrane regions (helical) follow at residues 2–22, 52–74, 81–100, 112–132, 143–163, and 164–184; these read ITIV…GLWI, AGMA…PIIF, PLIF…FAGF, VIFG…FGAL, VTAS…GFIL, and SNYD…IIIR.

It belongs to the PlsY family. In terms of assembly, probably interacts with PlsX.

Its subcellular location is the cell membrane. It catalyses the reaction an acyl phosphate + sn-glycerol 3-phosphate = a 1-acyl-sn-glycero-3-phosphate + phosphate. Its pathway is lipid metabolism; phospholipid metabolism. Functionally, catalyzes the transfer of an acyl group from acyl-phosphate (acyl-PO(4)) to glycerol-3-phosphate (G3P) to form lysophosphatidic acid (LPA). This enzyme utilizes acyl-phosphate as fatty acyl donor, but not acyl-CoA or acyl-ACP. This chain is Glycerol-3-phosphate acyltransferase, found in Streptococcus pneumoniae (strain ATCC 700669 / Spain 23F-1).